Here is a 207-residue protein sequence, read N- to C-terminus: Outer-membrane lipoprotein LolB (207 aa).

The first 21 residues, 1–21 (MPLPDFRLIRLLPLAALVLTA), serve as a signal peptide directing secretion. C22 carries N-palmitoyl cysteine lipidation. A lipid anchor (S-diacylglycerol cysteine) is attached at C22.

The protein belongs to the LolB family. As to quaternary structure, monomer.

It localises to the cell outer membrane. In terms of biological role, plays a critical role in the incorporation of lipoproteins in the outer membrane after they are released by the LolA protein. The sequence is that of Outer-membrane lipoprotein LolB from Shigella boydii serotype 18 (strain CDC 3083-94 / BS512).